Reading from the N-terminus, the 202-residue chain is Imidazoleglycerol-phosphate dehydratase (202 aa).

Belongs to the imidazoleglycerol-phosphate dehydratase family.

It is found in the cytoplasm. It carries out the reaction D-erythro-1-(imidazol-4-yl)glycerol 3-phosphate = 3-(imidazol-4-yl)-2-oxopropyl phosphate + H2O. The protein operates within amino-acid biosynthesis; L-histidine biosynthesis; L-histidine from 5-phospho-alpha-D-ribose 1-diphosphate: step 6/9. This chain is Imidazoleglycerol-phosphate dehydratase, found in Acinetobacter baumannii (strain SDF).